We begin with the raw amino-acid sequence, 622 residues long: 1-deoxy-D-xylulose-5-phosphate synthase (622 aa).

Thiamine diphosphate is bound by residues H80 and 121–123 (GHS). D152 lines the Mg(2+) pocket. Thiamine diphosphate contacts are provided by residues 153 to 154 (GA), N181, Y288, and E369. Residue N181 coordinates Mg(2+).

The protein belongs to the transketolase family. DXPS subfamily. As to quaternary structure, homodimer. The cofactor is Mg(2+). Requires thiamine diphosphate as cofactor.

The enzyme catalyses D-glyceraldehyde 3-phosphate + pyruvate + H(+) = 1-deoxy-D-xylulose 5-phosphate + CO2. The protein operates within metabolic intermediate biosynthesis; 1-deoxy-D-xylulose 5-phosphate biosynthesis; 1-deoxy-D-xylulose 5-phosphate from D-glyceraldehyde 3-phosphate and pyruvate: step 1/1. Its function is as follows. Catalyzes the acyloin condensation reaction between C atoms 2 and 3 of pyruvate and glyceraldehyde 3-phosphate to yield 1-deoxy-D-xylulose-5-phosphate (DXP). This is 1-deoxy-D-xylulose-5-phosphate synthase from Psychromonas ingrahamii (strain DSM 17664 / CCUG 51855 / 37).